Consider the following 477-residue polypeptide: MSPQTETKASVGFKAGVKEYKLTYYTPEYQTKDTDILAAFRVTPQPGVPPEEAGAAVAAESSTGTWTTVWTDGLTSLDRYKGRCYRIERVVGEKDQYIAYVAYPLDLFEEGSVTNMFTSIVGNVFGFKALRALRLEDLRIPPAYVKTFQGPPHGIQVERDKLNKYGRPLLGCTIKPKLGLSAKNYGRAVYECLRGGLDFTKDDENVNSQPFMRWRDRFLFCAEALYKAQAETGEIKGHYLNATAGTCEEMIKRAVFARELGVPIVMHDYLTGGFTANTSLAHYCRDNGLLLHIHRAMHAVIDRQKNHGIHFRVLAKALRMSGGDHIHSGTVVGKLEGERDITLGFVDLLRDDFVEQDRSRGIYFTQDWVSLPGVLPVASGGIHVWHMPALTEIFGDDSVLQFGGGTLGHPWGNAPGAVANRVALEACVQARNEGRDLAQEGNEIIREACKWSPELAAACEVWKEIVFNFAAVDVLDK.

A propeptide spanning residues 1-2 (MS) is cleaved from the precursor. Residue Pro3 is modified to N-acetylproline. Lys14 carries the N6,N6,N6-trimethyllysine modification. Residues Asn123 and Thr173 each contribute to the substrate site. The Proton acceptor role is filled by Lys175. Lys177 is a binding site for substrate. The Mg(2+) site is built by Lys201, Asp203, and Glu204. Lys201 is modified (N6-carboxylysine). The active-site Proton acceptor is His294. 3 residues coordinate substrate: Arg295, His327, and Ser379.

It belongs to the RuBisCO large chain family. Type I subfamily. In terms of assembly, heterohexadecamer of 8 large chains and 8 small chains; disulfide-linked. The disulfide link is formed within the large subunit homodimers. Requires Mg(2+) as cofactor. Post-translationally, the disulfide bond which can form in the large chain dimeric partners within the hexadecamer appears to be associated with oxidative stress and protein turnover.

The protein resides in the plastid. Its subcellular location is the chloroplast. The enzyme catalyses 2 (2R)-3-phosphoglycerate + 2 H(+) = D-ribulose 1,5-bisphosphate + CO2 + H2O. It catalyses the reaction D-ribulose 1,5-bisphosphate + O2 = 2-phosphoglycolate + (2R)-3-phosphoglycerate + 2 H(+). Functionally, ruBisCO catalyzes two reactions: the carboxylation of D-ribulose 1,5-bisphosphate, the primary event in carbon dioxide fixation, as well as the oxidative fragmentation of the pentose substrate in the photorespiration process. Both reactions occur simultaneously and in competition at the same active site. This Nicotiana tomentosiformis (Tobacco) protein is Ribulose bisphosphate carboxylase large chain.